We begin with the raw amino-acid sequence, 154 residues long: Putative nickel-responsive regulator (154 aa).

Ni(2+)-binding residues include His-95, His-106, His-108, and Cys-114.

Belongs to the transcriptional regulatory CopG/NikR family. Ni(2+) serves as cofactor.

Functionally, transcriptional regulator. This chain is Putative nickel-responsive regulator, found in Caldanaerobacter subterraneus subsp. tengcongensis (strain DSM 15242 / JCM 11007 / NBRC 100824 / MB4) (Thermoanaerobacter tengcongensis).